The following is a 358-amino-acid chain: Peptide chain release factor 1 (358 aa).

Position 233 is an N5-methylglutamine (Gln233).

It belongs to the prokaryotic/mitochondrial release factor family. Methylated by PrmC. Methylation increases the termination efficiency of RF1.

The protein localises to the cytoplasm. Peptide chain release factor 1 directs the termination of translation in response to the peptide chain termination codons UAG and UAA. This is Peptide chain release factor 1 from Brevibacillus brevis (strain 47 / JCM 6285 / NBRC 100599).